A 376-amino-acid polypeptide reads, in one-letter code: Erythronate-4-phosphate dehydrogenase (376 aa).

Substrate contacts are provided by serine 45 and threonine 67. Aspartate 147 lines the NAD(+) pocket. The active site involves arginine 209. Aspartate 233 contributes to the NAD(+) binding site. Glutamate 238 is a catalytic residue. Histidine 255 acts as the Proton donor in catalysis. Glycine 258 is a binding site for NAD(+). A substrate-binding site is contributed by tyrosine 259.

This sequence belongs to the D-isomer specific 2-hydroxyacid dehydrogenase family. PdxB subfamily. In terms of assembly, homodimer.

It localises to the cytoplasm. The catalysed reaction is 4-phospho-D-erythronate + NAD(+) = (R)-3-hydroxy-2-oxo-4-phosphooxybutanoate + NADH + H(+). Its pathway is cofactor biosynthesis; pyridoxine 5'-phosphate biosynthesis; pyridoxine 5'-phosphate from D-erythrose 4-phosphate: step 2/5. In terms of biological role, catalyzes the oxidation of erythronate-4-phosphate to 3-hydroxy-2-oxo-4-phosphonooxybutanoate. This chain is Erythronate-4-phosphate dehydrogenase, found in Shewanella baltica (strain OS223).